We begin with the raw amino-acid sequence, 553 residues long: Protein PNS1 (553 aa).

The segment covering 1–17 (MYGKSGPPPEGYVPQHP) has biased composition (pro residues). Positions 1-49 (MYGKSGPPPEGYVPQHPPAQGYAPHNPPPGYVHENPFQEPVPQGQEYSP) are disordered. At 1-95 (MYGKSGPPPE…AGNRLKFNDW (95 aa)) the chain is on the cytoplasmic side. Residues 96–116 (PFTIIFLLTVGAFIAVAVLTL) form a helical membrane-spanning segment. Over 117 to 143 (RGWSLSPTSNGSGIYDGDNTHTLNTNA) the chain is Extracellular. Asn-126 carries an N-linked (GlcNAc...) asparagine glycan. The chain crosses the membrane as a helical span at residues 144–164 (AILLLISCGVAVALSVFGLVL). At 165 to 170 (AGMYTK) the chain is on the cytoplasmic side. A helical transmembrane segment spans residues 171-191 (FFIYAAMILNTVVGLGTAITY). At 192–196 (LVLRH) the chain is on the extracellular side. Residues 197–217 (WSAGIVFMIFTILTAVCYWLM) traverse the membrane as a helical segment. Topologically, residues 218–243 (RSRIPFSVAVLRTVMSVMKKHPQTWL) are cytoplasmic. Residues 244–264 (VSLLGTIVSAAFSVIFSVVLV) form a helical membrane-spanning segment. Residues 265-288 (ATYIKYDPKSENGGCDVSGGSCSR) lie on the Extracellular side of the membrane. A helical transmembrane segment spans residues 289–309 (GKLIGILVLVFFCGFYISEVI). Residues 310-346 (RNVIHCTIAGIYGCWYYFSKSDQGMPRWPAFGSLKRA) lie on the Cytoplasmic side of the membrane. A helical membrane pass occupies residues 347-367 (LTTSFGSICFGSLIVSLIQLL). Topologically, residues 368 to 385 (RQIIQLLRNGIISGISDS) are extracellular. The chain crosses the membrane as a helical span at residues 386 to 406 (GWMQCLWLILDAVVGVFEWMA). The Cytoplasmic segment spans residues 407–450 (EYFNHYAYCFIALYGKPYLRAAKETWHMLREKGIDALINDNLIN). Residues 451-471 (LALGFYTLFVGYTTALFSYLF) form a helical membrane-spanning segment. The Extracellular portion of the chain corresponds to 472-483 (LRFTKPDYNSGG). Residues 484-504 (GFNAVLMAFSFLIAIQLTHVA) traverse the membrane as a helical segment. At 505 to 553 (TETIRSGTATFFVALGNDPEIFRVSYPQRFDEIFRAYPDVLNKLSHQHV) the chain is on the cytoplasmic side.

Belongs to the CTL (choline transporter-like) family.

It localises to the cell membrane. Functionally, probably involved in transport through the plasma membrane. The polypeptide is Protein PNS1 (PNS1) (Eremothecium gossypii (strain ATCC 10895 / CBS 109.51 / FGSC 9923 / NRRL Y-1056) (Yeast)).